A 232-amino-acid chain; its full sequence is Ubiquinone biosynthesis O-methyltransferase (232 aa).

Residues Arg36, Gly55, Asp76, and Met120 each coordinate S-adenosyl-L-methionine.

It belongs to the methyltransferase superfamily. UbiG/COQ3 family.

It catalyses the reaction a 3-demethylubiquinol + S-adenosyl-L-methionine = a ubiquinol + S-adenosyl-L-homocysteine + H(+). It carries out the reaction a 3-(all-trans-polyprenyl)benzene-1,2-diol + S-adenosyl-L-methionine = a 2-methoxy-6-(all-trans-polyprenyl)phenol + S-adenosyl-L-homocysteine + H(+). It participates in cofactor biosynthesis; ubiquinone biosynthesis. Functionally, O-methyltransferase that catalyzes the 2 O-methylation steps in the ubiquinone biosynthetic pathway. In Burkholderia lata (strain ATCC 17760 / DSM 23089 / LMG 22485 / NCIMB 9086 / R18194 / 383), this protein is Ubiquinone biosynthesis O-methyltransferase.